The chain runs to 903 residues: Dynamin-like GTPase msp1, mitochondrial (903 aa).

Residues 1 to 78 (MGISWFLSRF…RFFSFSSISR (78 aa)) constitute a mitochondrion transit peptide. Residues 86-103 (LPVAGFSLVAGGAAYIGA) traverse the membrane as a helical segment. The segment covering 167–188 (VLQAERAKEHRSNSNDKQKSSD) has biased composition (basic and acidic residues). The tract at residues 167–198 (VLQAERAKEHRSNSNDKQKSSDNDEDPNDTTV) is disordered. The helical transmembrane segment at 198–214 (VGIGAALAASILSVDSV) threads the bilayer. The 272-residue stretch at 260–531 (AVTLPSIVVI…LEYTMSKNLQ (272 aa)) folds into the Dynamin-type G domain. Residues 270 to 277 (GSQSSGKS) form a G1 motif region. Residues S273, S274, G275, K276, S277, S278, and G292 each coordinate GTP. S277 lines the Mg(2+) pocket. The G2 motif stretch occupies residues 296-298 (VTR). Positions 297 and 370 each coordinate Mg(2+). The interval 370-373 (DLPG) is G3 motif. Residues 438 to 441 (TKMD) form a G4 motif region. K439, D441, and S468 together coordinate GTP. Positions 467-470 (ISRI) are G5 motif. The tract at residues 691–805 (ATSEQVENCV…VLKSRACKHK (115 aa)) is paddle region. C802 and C811 form a disulfide bridge. A GED domain is found at 805–898 (KEAKYTCPEI…KINSLVILEQ (94 aa)).

This sequence belongs to the TRAFAC class dynamin-like GTPase superfamily. Dynamin/Fzo/YdjA family. As to quaternary structure, homooligomer. Interacts with cdr1. In terms of processing, cleavage of the transit peptide by mitochondrial processing protease (MPP) produces a long integral membrane form of msp1 (l-msp1). Further processing by a rhomboid protease after the transmembrane regions produces a short peripheral membrane form of msp1 (s-msp1). Both isoforms are required for full activity.

It is found in the mitochondrion inner membrane. The protein resides in the mitochondrion intermembrane space. The enzyme catalyses GTP + H2O = GDP + phosphate + H(+). Dynamin-related GTPase that is essential for normal mitochondrial morphology by mediating fusion of the mitochondrial inner membranes and maintaining respiratory chain function. Exists in two forms: the transmembrane, long form (Dynamin-like GTPase msp1, long form; l-msp1), which is tethered to the inner mitochondrial membrane, and the short soluble form (Dynamin-like GTPase msp1, short form; s-msp1), which results from proteolytic cleavage and localizes in the intermembrane space. Both forms (l-msp1 and s-msp1) cooperate to catalyze the fusion of the mitochondrial inner membrane. Its role in mitochondrial morphology is required for mitochondrial genome maintenance. Functionally, constitutes the transmembrane long form (l-msp1) that plays a central role in mitochondrial inner membrane fusion. L-msp1 and the soluble short form (s-msp1) form higher-order helical assemblies that coordinate the fusion of mitochondrial inner membranes. Inner membrane-anchored l-msp1 molecules initiate membrane remodeling by recruiting soluble s-msp1 to rapidly polymerize into a flexible cylindrical scaffold encaging the mitochondrial inner membrane. Once at the membrane surface, the formation of s-msp1 helices induce bilayer curvature. Msp1 dimerization through the paddle region, which inserts into cardiolipin-containing membrane, promotes GTP hydrolysis and the helical assembly of a flexible msp1 lattice on the membrane, which drives membrane curvature and mitochondrial fusion. Its function is as follows. Constitutes the soluble short form (s-msp1) generated by cleavage, which plays a central role in mitochondrial inner membrane fusion. The transmembrane long form (l-msp1) and the s-msp1 form higher-order helical assemblies that coordinate the fusion of mitochondrial inner membranes. Inner membrane-anchored l-msp1 molecules initiate membrane remodeling by recruiting soluble s-msp1 to rapidly polymerize into a flexible cylindrical scaffold encaging the mitochondrial inner membrane. Once at the membrane surface, the formation of s-msp1 helices induce bilayer curvature. Msp1 dimerization through the paddle region, which inserts into cardiolipin-containing membrane, promotes GTP hydrolysis and the helical assembly of a flexible msp1 lattice on the membrane, which drives membrane curvature and mitochondrial fusion. The chain is Dynamin-like GTPase msp1, mitochondrial from Schizosaccharomyces pombe (strain 972 / ATCC 24843) (Fission yeast).